Here is a 305-residue protein sequence, read N- to C-terminus: NAD kinase 2 (305 aa).

Asp78 functions as the Proton acceptor in the catalytic mechanism. Residues 78–79 (DG), 152–153 (NE), Asp182, 193–198 (TAYSLS), and Asn251 contribute to the NAD(+) site.

Belongs to the NAD kinase family. Requires a divalent metal cation as cofactor.

The protein resides in the cytoplasm. The catalysed reaction is NAD(+) + ATP = ADP + NADP(+) + H(+). Its function is as follows. Involved in the regulation of the intracellular balance of NAD and NADP, and is a key enzyme in the biosynthesis of NADP. Catalyzes specifically the phosphorylation on 2'-hydroxyl of the adenosine moiety of NAD to yield NADP. The sequence is that of NAD kinase 2 from Synechococcus sp. (strain ATCC 27144 / PCC 6301 / SAUG 1402/1) (Anacystis nidulans).